We begin with the raw amino-acid sequence, 1531 residues long: Protein turtle (1531 aa).

The Extracellular segment spans residues 1–858 (MGVCADLGSH…PARVKHKAIT (858 aa)). Residues 19–44 (QHNTEKSKEQQQQSQPLEIPEQRASK) are disordered. Ig-like C2-type domains are found at residues 132–243 (PEDA…KNGT), 253–340 (PRFS…ARVI), 344–436 (GAVI…AYLS), 440–529 (PAKV…GVMD), and 536–624 (PAFT…MAVT). Disulfide bonds link cysteine 150-cysteine 227, cysteine 275-cysteine 324, cysteine 366-cysteine 419, cysteine 462-cysteine 513, and cysteine 558-cysteine 611. Fibronectin type-III domains follow at residues 632–728 (QPHA…TLED) and 760–851 (PPRN…VPAR). Residues 859–879 (AGVVGGILFFIVAIILSVCAV) form a helical membrane-spanning segment. Residues 880–1531 (KICNKRKRRK…QAMQQMESVC (652 aa)) are Cytoplasmic-facing. 2 disordered regions span residues 1248–1269 (EETR…VPLQ) and 1318–1395 (NLNL…SYPR). Residues 1333–1349 (SPESRSSSSGFGSKNTS) are compositionally biased toward low complexity. Residues 1380–1389 (QQAQGQTPHG) are compositionally biased toward polar residues.

It belongs to the immunoglobulin superfamily. Turtle family. As to quaternary structure, interacts with bdl. As to expression, exclusively expressed in the central nervous system.

It is found in the membrane. Functionally, essential protein that plays a role in the establishment of coordinated motor control. In the developing eye, involved in axonal targeting of the R7 photoreceptor. The sequence is that of Protein turtle (tutl) from Drosophila melanogaster (Fruit fly).